The sequence spans 205 residues: Ribosomal RNA small subunit methyltransferase G (205 aa).

S-adenosyl-L-methionine contacts are provided by residues glycine 70, leucine 75, 124-125, and arginine 138; that span reads IE.

Belongs to the methyltransferase superfamily. RNA methyltransferase RsmG family.

The protein localises to the cytoplasm. The catalysed reaction is guanosine(527) in 16S rRNA + S-adenosyl-L-methionine = N(7)-methylguanosine(527) in 16S rRNA + S-adenosyl-L-homocysteine. Specifically methylates the N7 position of guanine in position 527 of 16S rRNA. This is Ribosomal RNA small subunit methyltransferase G from Ruegeria sp. (strain TM1040) (Silicibacter sp.).